A 632-amino-acid chain; its full sequence is U-box domain-containing protein 14 (632 aa).

One can recognise a U-box domain in the interval 247 to 321 (VIPEYFRCPI…ALWCESNGIE (75 aa)). 5 ARM repeats span residues 377–416 (VDNR…NLSI), 418–457 (EGNK…SLSV), 459–498 (DENK…NLCI), 500–539 (QGNK…ILST), and 541–580 (QEGK…YLCI).

Homodimer. Interacts with SNL1. Binds to SD11, SD16, SD17, SD18, SD113, SD129 and SD25. Expressed in flowers, green siliques, seeds and rosette leaves.

The enzyme catalyses S-ubiquitinyl-[E2 ubiquitin-conjugating enzyme]-L-cysteine + [acceptor protein]-L-lysine = [E2 ubiquitin-conjugating enzyme]-L-cysteine + N(6)-ubiquitinyl-[acceptor protein]-L-lysine.. It participates in protein modification; protein ubiquitination. Its function is as follows. Functions as an E3 ubiquitin ligase with specific E2 ubiquitin-conjugating enzymes. Undergoes auto-ubiquitination. The chain is U-box domain-containing protein 14 (PUB14) from Arabidopsis thaliana (Mouse-ear cress).